A 60-amino-acid polypeptide reads, in one-letter code: Large ribosomal subunit protein bL32 (60 aa).

The protein belongs to the bacterial ribosomal protein bL32 family.

The polypeptide is Large ribosomal subunit protein bL32 (Kosmotoga olearia (strain ATCC BAA-1733 / DSM 21960 / TBF 19.5.1)).